Here is a 590-residue protein sequence, read N- to C-terminus: Membrane protein insertase YidC (590 aa).

5 helical membrane-spanning segments follow: residues 5-25, 368-388, 433-453, 483-503, and 519-539; these read SVIG…FMKP, GLII…LSLA, LGGC…FYVF, LPLY…TVFF, and IMMW…PAGL.

Belongs to the OXA1/ALB3/YidC family. Type 1 subfamily. In terms of assembly, interacts with the Sec translocase complex via SecD. Specifically interacts with transmembrane segments of nascent integral membrane proteins during membrane integration.

Its subcellular location is the cell inner membrane. Required for the insertion and/or proper folding and/or complex formation of integral membrane proteins into the membrane. Involved in integration of membrane proteins that insert both dependently and independently of the Sec translocase complex, as well as at least some lipoproteins. Aids folding of multispanning membrane proteins. The protein is Membrane protein insertase YidC of Chlorobaculum tepidum (strain ATCC 49652 / DSM 12025 / NBRC 103806 / TLS) (Chlorobium tepidum).